The following is a 191-amino-acid chain: Heme-binding protein 1 (191 aa).

It belongs to the HEBP family. Monomer.

It localises to the cytoplasm. May bind free porphyrinogens that may be present in the cell and thus facilitate removal of these potentially toxic compound. Binds with a high affinity to one molecule of heme or porphyrins. It binds metalloporphyrins, free porphyrins and N-methylprotoporphyrin with similar affinities. The protein is Heme-binding protein 1 (HEBP1) of Bos taurus (Bovine).